A 213-amino-acid polypeptide reads, in one-letter code: Neuromodulin (213 aa).

The interval 1 to 213 (MLCCIRRTKP…AEEAGKDQNV (213 aa)) is disordered. S-palmitoyl cysteine attachment occurs at residues Cys3 and Cys4. The segment covering 9 to 33 (KPVEKNEEADQEIKQDGTKPEENAH) has biased composition (basic and acidic residues). The region spanning 32–61 (AHKAATKIQASFRGHITRKKMKDEDKDGEN) is the IQ domain. Residues 57–73 (KDGENDTAPDESAETEE) are compositionally biased toward acidic residues. Basic and acidic residues predominate over residues 74-86 (KEERVSPSEEKPV). The segment covering 102–122 (PNSPAAEAPPTAATDSAPSDT) has biased composition (low complexity). Over residues 157–169 (EKEEEEEEEEEEE) the composition is skewed to acidic residues. The span at 191–213 (QTDKKEALDDSKPAEEAGKDQNV) shows a compositional bias: basic and acidic residues.

Belongs to the neuromodulin family. In terms of assembly, binds calmodulin with a greater affinity in the absence of Ca(2+) than in its presence. Post-translationally, palmitoylated. Palmitoylation is essential for plasma membrane association.

Its subcellular location is the cell membrane. The protein localises to the cell projection. It localises to the growth cone membrane. The protein resides in the synapse. It is found in the filopodium membrane. Its function is as follows. This protein is associated with nerve growth. It is a major component of the motile 'growth cones' that form the tips of elongating axons. Plays a role in axonal and dendritic filopodia induction. The chain is Neuromodulin (gap43) from Carassius auratus (Goldfish).